The following is a 175-amino-acid chain: Alkyl hydroperoxide reductase AhpD (175 aa).

The active-site Proton donor is the Cys131. A disulfide bridge connects residues Cys131 and Cys134. Cys134 serves as the catalytic Cysteine sulfenic acid (-SOH) intermediate.

This sequence belongs to the AhpD family.

It carries out the reaction N(6)-[(R)-dihydrolipoyl]-L-lysyl-[lipoyl-carrier protein] + a hydroperoxide = N(6)-[(R)-lipoyl]-L-lysyl-[lipoyl-carrier protein] + an alcohol + H2O. Its function is as follows. Antioxidant protein with alkyl hydroperoxidase activity. Required for the reduction of the AhpC active site cysteine residues and for the regeneration of the AhpC enzyme activity. This Brucella melitensis biotype 1 (strain ATCC 23456 / CCUG 17765 / NCTC 10094 / 16M) protein is Alkyl hydroperoxide reductase AhpD.